Reading from the N-terminus, the 293-residue chain is Pyridoxal 5'-phosphate synthase subunit PdxS (293 aa).

Aspartate 23 is a D-ribose 5-phosphate binding site. Lysine 80 serves as the catalytic Schiff-base intermediate with D-ribose 5-phosphate. Glycine 152 lines the D-ribose 5-phosphate pocket. Residue arginine 164 participates in D-glyceraldehyde 3-phosphate binding. D-ribose 5-phosphate contacts are provided by residues glycine 213 and 234 to 235 (GS).

The protein belongs to the PdxS/SNZ family. As to quaternary structure, in the presence of PdxT, forms a dodecamer of heterodimers.

The catalysed reaction is aldehydo-D-ribose 5-phosphate + D-glyceraldehyde 3-phosphate + L-glutamine = pyridoxal 5'-phosphate + L-glutamate + phosphate + 3 H2O + H(+). The protein operates within cofactor biosynthesis; pyridoxal 5'-phosphate biosynthesis. In terms of biological role, catalyzes the formation of pyridoxal 5'-phosphate from ribose 5-phosphate (RBP), glyceraldehyde 3-phosphate (G3P) and ammonia. The ammonia is provided by the PdxT subunit. Can also use ribulose 5-phosphate and dihydroxyacetone phosphate as substrates, resulting from enzyme-catalyzed isomerization of RBP and G3P, respectively. The chain is Pyridoxal 5'-phosphate synthase subunit PdxS from Syntrophus aciditrophicus (strain SB).